A 175-amino-acid polypeptide reads, in one-letter code: Regenerating islet-derived protein 3-beta (175 aa).

The first 26 residues, 1–26, serve as a signal peptide directing secretion; sequence MLHRLAFPVMSWMLLSCLMLLSQVQG. Positions 27–37 are excised as a propeptide; the sequence is EDSPKKIPSAR. 3 cysteine pairs are disulfide-bonded: C40-C51, C68-C171, and C146-C163. In terms of domain architecture, C-type lectin spans 47–172; it reads YGSYCYALFQ…CEVKLPYVCK (126 aa). Position 107 (H107) interacts with Zn(2+). Residues 114-116 carry the EPN motif; it reads EPN. E121 provides a ligand contact to Zn(2+).

In terms of assembly, forms a hexameric membrane-permeabilizing oligomeric pore on membrane phospholipids. The hexamer is formed by three dimers related by helical symmetry. Forms filaments, filamentation traps pore complexes and limits damage to host cells. Interacts with EXTL3. Proteolytic processing by trypsin removes an inhibitory N-terminal propeptide and is essential for peptidoglycan binding and antibacterial activity. In terms of tissue distribution, constitutively expressed in intestine.

Its subcellular location is the secreted. Its activity is regulated as follows. Lipopolysaccharide inhibits pore-forming activity, explaining why is bactericidal for Gram-positive but not Gram-negative bacteria. Its function is as follows. Bactericidal C-type lectin which acts against several intestinal Gram-positive bacteria and Gram-negative bacteria. Lacks antibacterial activity against S.typhimurium. May play a role in protection against infection with S.enteritidis by inhibiting its translocation from the gut lumen into intestinal tissues and further extraintestinal tissues. In terms of biological role, acts as a hormone in response to different stimuli. Secreted by different cell types to activate its receptor EXTL3 and induce cell specific signaling pathways. In pancreas, is able stimulate cell proliferation. This Rattus norvegicus (Rat) protein is Regenerating islet-derived protein 3-beta.